The sequence spans 615 residues: Membrane protein insertase YidC (615 aa).

The next 5 membrane-spanning stretches (helical) occupy residues 9–29 (LMFI…VLGP), 384–404 (LVGN…LVLY), 458–478 (LPML…TVTI), 516–536 (LIGA…FTMW), and 556–576 (WFPV…VIYW).

Belongs to the OXA1/ALB3/YidC family. Type 1 subfamily. As to quaternary structure, interacts with the Sec translocase complex via SecD. Specifically interacts with transmembrane segments of nascent integral membrane proteins during membrane integration.

The protein localises to the cell inner membrane. In terms of biological role, required for the insertion and/or proper folding and/or complex formation of integral membrane proteins into the membrane. Involved in integration of membrane proteins that insert both dependently and independently of the Sec translocase complex, as well as at least some lipoproteins. Aids folding of multispanning membrane proteins. This is Membrane protein insertase YidC from Caulobacter vibrioides (strain ATCC 19089 / CIP 103742 / CB 15) (Caulobacter crescentus).